A 272-amino-acid polypeptide reads, in one-letter code: MLRIQALTKTYKNGEAALRGVSLSVGAGEIIGLIGPSGAGKSTLIRCVNRLIEPSSGRVQLGEVELTGLSSGALRRERRRIGMIFQEYALIERLTVMENVLAGRLGYTGFWNSWFRRFAEQDIQRAIALLERVGLIDHIDKRADALSGGQRQRVGIARALIQQPELLLVDEPTASLDPKTSRSVMRLLTELCIENRLAAIVNIHDVVLAQAFLPRIVGLNAGIVVYDGPASGLTAEVLTSIYGEEDWTRTAAGDGGTDDGEPLIIARMEAAQ.

An ABC transporter domain is found at 2–246; that stretch reads LRIQALTKTY…VLTSIYGEED (245 aa). 35-42 serves as a coordination point for ATP; that stretch reads GPSGAGKS.

It belongs to the ABC transporter superfamily. Phosphonates importer (TC 3.A.1.9.1) family. The complex is composed of two ATP-binding proteins (PhnC), two transmembrane proteins (PhnE) and a solute-binding protein (PhnD).

The protein resides in the cell inner membrane. The catalysed reaction is phosphonate(out) + ATP + H2O = phosphonate(in) + ADP + phosphate + H(+). Part of the ABC transporter complex PhnCDE involved in phosphonates import. Responsible for energy coupling to the transport system. The polypeptide is Phosphonates import ATP-binding protein PhnC 1 (Rhodopseudomonas palustris (strain BisB18)).